We begin with the raw amino-acid sequence, 168 residues long: MSVANSRIAVYPGTFDPITNGHIDLVNRAAPLFERVVVGVAYSPSKGPALPLERRVELAQEALAAHANVEVRGFDTLLAHFVRDMGAGVLLRGLRAVSDFEYEFQMASMNRHLIPEVETLFLTPAEQYSFISSSLVREIARLGGDVSGFVPASVVDALRQVRESRAQV.

Thr14 lines the substrate pocket. ATP is bound by residues 14 to 15 (TF) and His22. Substrate-binding residues include Lys46, Leu78, and Arg92. ATP-binding positions include 93–95 (GLR), Glu103, and 128–134 (YSFISSS).

It belongs to the bacterial CoaD family. Homohexamer. Mg(2+) is required as a cofactor.

The protein localises to the cytoplasm. It carries out the reaction (R)-4'-phosphopantetheine + ATP + H(+) = 3'-dephospho-CoA + diphosphate. It functions in the pathway cofactor biosynthesis; coenzyme A biosynthesis; CoA from (R)-pantothenate: step 4/5. Its function is as follows. Reversibly transfers an adenylyl group from ATP to 4'-phosphopantetheine, yielding dephospho-CoA (dPCoA) and pyrophosphate. The polypeptide is Phosphopantetheine adenylyltransferase (Xanthomonas campestris pv. campestris (strain B100)).